The following is a 105-amino-acid chain: Defensin-like protein 106 (105 aa).

A signal peptide spans 1–24 (MANTPKTLIAFVFSVIVIISYVHC). Intrachain disulfides connect Cys57-Cys94, Cys63-Cys87, Cys73-Cys92, and Cys77-Cys93.

It belongs to the DEFL family.

It is found in the secreted. The sequence is that of Defensin-like protein 106 from Arabidopsis thaliana (Mouse-ear cress).